Reading from the N-terminus, the 139-residue chain is Plastocyanin (139 aa).

The N-terminal stretch at 1–34 (MKLISASLRRFSLAVLTILLVVSSFAVFTPSASA) is a signal peptide. In terms of domain architecture, Plastocyanin-like spans 35 to 139 (ETYQVKLGTD…GMVGTITVQG (105 aa)). The Cu cation site is built by histidine 73, cysteine 123, histidine 126, and methionine 131.

It belongs to the plastocyanin family. Requires Cu(2+) as cofactor.

It localises to the cellular thylakoid membrane. In terms of biological role, participates in electron transfer between P700 and the cytochrome b6-f complex in photosystem I. In Nostoc punctiforme (strain ATCC 29133 / PCC 73102), this protein is Plastocyanin.